The following is a 263-amino-acid chain: (E)-2-((N-methylformamido)methylene)succinate hydrolase (263 aa).

S96 acts as the Nucleophile in catalysis. Catalysis depends on residues N120 and H241.

The protein belongs to the AB hydrolase superfamily. As to quaternary structure, monomer.

The catalysed reaction is (E)-2-((N-methylformamido) methylene)succinate + 2 H2O + H(+) = succinate semialdehyde + methylamine + formate + CO2. Its function is as follows. Involved in the degradation of the pyridine ring of trigonelline (TG; N-methylnicotinate) into succinate and methylamine as carbon and nitrogen sources, respectively. Catalyzes the hydrolysis of (E)-2-((N-methylformamido)methylene)succinate (MFMS) into formic acid, succinate semialdehyde (SSA), methylamine and carbon dioxide. The sequence is that of (E)-2-((N-methylformamido)methylene)succinate hydrolase from Acinetobacter baylyi (strain ATCC 33305 / BD413 / ADP1).